Reading from the N-terminus, the 505-residue chain is Maturase K (505 aa).

The protein belongs to the intron maturase 2 family. MatK subfamily.

The protein localises to the plastid. The protein resides in the chloroplast. Its function is as follows. Usually encoded in the trnK tRNA gene intron. Probably assists in splicing its own and other chloroplast group II introns. The sequence is that of Maturase K from Morus indica (Mulberry).